Reading from the N-terminus, the 202-residue chain is Small ribosomal subunit protein uS4c (202 aa).

Residues 90-153 (MRLDNVTFRL…KSETIISKNI (64 aa)) enclose the S4 RNA-binding domain.

The protein belongs to the universal ribosomal protein uS4 family. In terms of assembly, part of the 30S ribosomal subunit. Contacts protein S5. The interaction surface between S4 and S5 is involved in control of translational fidelity.

The protein localises to the plastid. It localises to the chloroplast. Functionally, one of the primary rRNA binding proteins, it binds directly to 16S rRNA where it nucleates assembly of the body of the 30S subunit. With S5 and S12 plays an important role in translational accuracy. The sequence is that of Small ribosomal subunit protein uS4c (rps4) from Hypnum cupressiforme (Cypress-leaved plait-moss).